We begin with the raw amino-acid sequence, 105 residues long: uncharacterized protein (105 aa).

This is an uncharacterized protein from Saccharolobus islandicus (Sulfolobus islandicus).